Reading from the N-terminus, the 177-residue chain is Large ribosomal subunit protein uL6 (177 aa).

It belongs to the universal ribosomal protein uL6 family. Part of the 50S ribosomal subunit.

In terms of biological role, this protein binds to the 23S rRNA, and is important in its secondary structure. It is located near the subunit interface in the base of the L7/L12 stalk, and near the tRNA binding site of the peptidyltransferase center. This Rickettsia massiliae (strain Mtu5) protein is Large ribosomal subunit protein uL6.